Consider the following 823-residue polypeptide: Sphingomyelin phosphodiesterase 4 (823 aa).

2 positions are modified to phosphoserine: Ser-130 and Ser-245. Thr-665 carries the post-translational modification Phosphothreonine. Ser-749 bears the Phosphoserine mark. Residues 776–796 form a helical membrane-spanning segment; that stretch reads LLLLLMAFFVASLFCIGPLSC.

Requires Mg(2+) as cofactor. As to expression, expressed in skeletal muscle (at protein level). Expressed in skeletal muscle but a lower levels than isoform 1 (at protein level).

The protein localises to the endoplasmic reticulum membrane. Its subcellular location is the golgi apparatus membrane. It is found in the nucleus envelope. It localises to the cell membrane. The protein resides in the sarcolemma. The enzyme catalyses a sphingomyelin + H2O = phosphocholine + an N-acylsphing-4-enine + H(+). Activated by phosphatidylserine and tumor necrosis factor (TNF). Inhibited by scyphostatin. Functionally, catalyzes the hydrolysis of membrane sphingomyelin to form phosphorylcholine and ceramide. It has a relevant role in the homeostasis of membrane sphingolipids, thereby influencing membrane integrity, and endoplasmic reticulum organization and function. May sensitize cells to DNA damage-induced apoptosis. In skeletal muscle, mediates TNF-stimulated oxidant production. In Mus musculus (Mouse), this protein is Sphingomyelin phosphodiesterase 4 (Smpd4).